A 350-amino-acid polypeptide reads, in one-letter code: F(420)H(2) dehydrogenase subunit H (350 aa).

Helical transmembrane passes span 21–41 (GTVGLVLVGAIFLGGMAAVWI), 94–114 (VFMLTSLFLMLVAIPVGAVFI), 128–148 (ISILFIEAVSAINIFGIFMAA), 173–193 (PLGIAIVSVAVMTGSLNIIDI), 200–220 (FVWNIFLQPIGFVVFFIALMA), 261–281 (ILGSFLVALLFLGGWNVPAFV), 288–308 (GLIAPTGILLLKTVLVLMTII), and 330–350 (LLPLSLLNLAWAVGLGLYLGA).

Belongs to the complex I subunit 1 family. As to quaternary structure, the FPO complex is composed of at least 13 different subunits. FpoA, FpoH, FpoJ, FpoK, FpoL, FpoM and FpoN proteins constitute the membrane sector of the complex.

It localises to the cell membrane. It carries out the reaction methanophenazine + reduced coenzyme F420-(gamma-L-Glu)(n) = dihydromethanophenazine + oxidized coenzyme F420-(gamma-L-Glu)(n) + H(+). Component of the F(420)H(2) dehydrogenase (FPO complex) which is part of the energy-conserving F(420)H(2):heterodisulfide oxidoreductase system. The membrane-bound electron transfer system of the complex plays an important role in the metabolism of methylotrophic methanogens when the organisms grow on methanol or methylamines. Catalyzes the oxidation of methanophenazine to dihydromethanophenazine. It shuttles electrons from F(420)H(2), via FAD and iron-sulfur (Fe-S) centers, to methanophenazine (an electron carrier in the membrane). It couples the redox reaction to proton translocation (for every two electrons transferred, two hydrogen ions are translocated across the cytoplasmic membrane), and thus conserves the redox energy in a proton gradient. It also catalyzes the oxidation of F(420)H(2) with quinones such as 2,3-dimethyl-1,4-naphthoquinone, 2-methyl-1,4-naphthoquinone and tetramethyl-p-benzoquinone. This Methanosarcina mazei (strain ATCC BAA-159 / DSM 3647 / Goe1 / Go1 / JCM 11833 / OCM 88) (Methanosarcina frisia) protein is F(420)H(2) dehydrogenase subunit H.